Consider the following 253-residue polypeptide: Triosephosphate isomerase (253 aa).

9 to 11 serves as a coordination point for substrate; that stretch reads NWK. The active-site Electrophile is the His97. The Proton acceptor role is filled by Glu169. Residues Gly175, Ser215, and 236–237 each bind substrate; that span reads GG.

It belongs to the triosephosphate isomerase family. In terms of assembly, homodimer.

Its subcellular location is the cytoplasm. The enzyme catalyses D-glyceraldehyde 3-phosphate = dihydroxyacetone phosphate. It functions in the pathway carbohydrate biosynthesis; gluconeogenesis. Its pathway is carbohydrate degradation; glycolysis; D-glyceraldehyde 3-phosphate from glycerone phosphate: step 1/1. Functionally, involved in the gluconeogenesis. Catalyzes stereospecifically the conversion of dihydroxyacetone phosphate (DHAP) to D-glyceraldehyde-3-phosphate (G3P). The sequence is that of Triosephosphate isomerase from Staphylococcus haemolyticus (strain JCSC1435).